Consider the following 403-residue polypeptide: Flavohemoprotein (403 aa).

A Globin domain is found at 1–138; the sequence is MLTQKTKDIV…LADVLMGMES (138 aa). A heme b-binding site is contributed by His85. Active-site charge relay system residues include Tyr95 and Glu137. Residues 149–403 are reductase; it reads GGWKGWRTFV…EVFGPDLFAE (255 aa). An FAD-binding FR-type domain is found at 152-262; that stretch reads KGWRTFVIRE…AAPYGSFHID (111 aa). FAD is bound by residues Tyr190 and 206–209; that span reads RQYS. NADP(+) is bound at residue 275–280; that stretch reads GVGLTP. Position 395 to 398 (395 to 398) interacts with FAD; sequence VFGP.

Belongs to the globin family. Two-domain flavohemoproteins subfamily. It in the C-terminal section; belongs to the flavoprotein pyridine nucleotide cytochrome reductase family. As to quaternary structure, monomer. FAD is required as a cofactor. Heme b serves as cofactor.

It is found in the cytoplasm. The catalysed reaction is 2 nitric oxide + NADPH + 2 O2 = 2 nitrate + NADP(+) + H(+). It carries out the reaction 2 nitric oxide + NADH + 2 O2 = 2 nitrate + NAD(+) + H(+). In terms of biological role, is involved in NO detoxification in an aerobic process, termed nitric oxide dioxygenase (NOD) reaction that utilizes O(2) and NAD(P)H to convert NO to nitrate, which protects the bacterium from various noxious nitrogen compounds. Therefore, plays a central role in the inducible response to nitrosative stress. In the presence of oxygen and NADH, FHP has NADH oxidase activity, which leads to the generation of superoxide and H(2)O(2), both in vitro and in vivo, and it has been suggested that FHP might act as an amplifier of superoxide stress. Under anaerobic conditions, FHP also exhibits nitric oxide reductase and FAD reductase activities. However, all these reactions are much lower than NOD activity. The sequence is that of Flavohemoprotein (hmp) from Cupriavidus necator (strain ATCC 17699 / DSM 428 / KCTC 22496 / NCIMB 10442 / H16 / Stanier 337) (Ralstonia eutropha).